The sequence spans 382 residues: Mannitol-1-phosphate 5-dehydrogenase (382 aa).

3–14 lines the NAD(+) pocket; sequence ALHFGAGNIGRG. Lysine 269 is subject to N6-acetyllysine.

This sequence belongs to the mannitol dehydrogenase family.

It carries out the reaction D-mannitol 1-phosphate + NAD(+) = beta-D-fructose 6-phosphate + NADH + H(+). In Shigella boydii serotype 18 (strain CDC 3083-94 / BS512), this protein is Mannitol-1-phosphate 5-dehydrogenase.